The chain runs to 416 residues: S-adenosylmethionine synthase (416 aa).

H16 serves as a coordination point for ATP. A Mg(2+)-binding site is contributed by D18. A K(+)-binding site is contributed by E44. L-methionine contacts are provided by E57 and Q100. The interval Q100–A110 is flexible loop. Residues D175 to K177, K251 to F252, D260, R266 to K267, A283, and K287 each bind ATP. D260 contributes to the L-methionine binding site. K291 is an L-methionine binding site.

It belongs to the AdoMet synthase family. In terms of assembly, homotetramer; dimer of dimers. It depends on Mg(2+) as a cofactor. Requires K(+) as cofactor.

Its subcellular location is the cytoplasm. It catalyses the reaction L-methionine + ATP + H2O = S-adenosyl-L-methionine + phosphate + diphosphate. Its pathway is amino-acid biosynthesis; S-adenosyl-L-methionine biosynthesis; S-adenosyl-L-methionine from L-methionine: step 1/1. Functionally, catalyzes the formation of S-adenosylmethionine (AdoMet) from methionine and ATP. The overall synthetic reaction is composed of two sequential steps, AdoMet formation and the subsequent tripolyphosphate hydrolysis which occurs prior to release of AdoMet from the enzyme. The chain is S-adenosylmethionine synthase from Microcystis aeruginosa (strain NIES-843 / IAM M-2473).